A 519-amino-acid chain; its full sequence is MNLTILRTKTALEDWCRQKHNHEINFVPTMGGLHQGHQELIKTARSFCKRKHSSQVLVSIFINPLQFDLEEDFKKYPRTFENDCKIAYEAGANAIWAPSFESVFPNGEEAHFKIQVPFSLNKYLCGASREGHFDGVATVVVRLLALVRPNRIFLGEKDWQQLVILRQLINDLGLPVLIHSIPTKRDQDGLPCSSRNVNLSKEERKKVVALPAVLQQAAQAFQENKPINLNNMKTTLEEHDLKVEYLETVDLKNLNPVNHDESKLCLLAAAVHCGNTRLIDHGFLMKRNPIVAIDGPAGAGKSTVTKKFAQKLGLIYLDTGAMYRAVTWLIQENNIDPQNSSELELILNDINLDICLSNTGNQQVLINGKDITTLIRSPTVTSQVSLVAAIGSVREKLTSQQKELGSKGGLVAEGRDIGTAVFPDAELKIFLTATAQERAKRRAIDLKKQGFSTPSLSELEKQIKERDRLDSSREIAPLSKAKDAQELITDGMNIEEVVELLINIFREKIPQEVWPTNAT.

The pantoate--beta-alanine ligase stretch occupies residues 1–282; it reads MNLTILRTKT…CGNTRLIDHG (282 aa). An ATP-binding site is contributed by 30 to 37; the sequence is MGGLHQGH. The Proton donor role is filled by histidine 37. Glutamine 66 is a (R)-pantoate binding site. Glutamine 66 provides a ligand contact to beta-alanine. Residue 155-158 participates in ATP binding; that stretch reads GEKD. Position 161 (glutamine 161) interacts with (R)-pantoate. 192-195 contributes to the ATP binding site; it reads CSSR. The cytidylate kinase stretch occupies residues 283 to 519; it reads FLMKRNPIVA…PQEVWPTNAT (237 aa).

This sequence in the N-terminal section; belongs to the pantothenate synthetase family. In the C-terminal section; belongs to the cytidylate kinase family. Type 1 subfamily.

It localises to the cytoplasm. It catalyses the reaction (R)-pantoate + beta-alanine + ATP = (R)-pantothenate + AMP + diphosphate + H(+). The enzyme catalyses CMP + ATP = CDP + ADP. The catalysed reaction is dCMP + ATP = dCDP + ADP. The protein operates within cofactor biosynthesis; (R)-pantothenate biosynthesis; (R)-pantothenate from (R)-pantoate and beta-alanine: step 1/1. Its function is as follows. Catalyzes the condensation of pantoate with beta-alanine in an ATP-dependent reaction via a pantoyl-adenylate intermediate. Catalyzes the transfer of a phosphate group from ATP to either CMP or dCMP to form CDP or dCDP and ADP, respectively. The sequence is that of Bifunctional pantoate ligase/cytidylate kinase from Prochlorococcus marinus (strain SARG / CCMP1375 / SS120).